Here is a 178-residue protein sequence, read N- to C-terminus: Transcription termination/antitermination protein NusG (178 aa).

The region spanning 130 to 159 (SVKVKEGPFANFIGTIEEIQLDKRKLKVHV) is the KOW domain.

Belongs to the NusG family.

Its function is as follows. Participates in transcription elongation, termination and antitermination. In Halalkalibacterium halodurans (strain ATCC BAA-125 / DSM 18197 / FERM 7344 / JCM 9153 / C-125) (Bacillus halodurans), this protein is Transcription termination/antitermination protein NusG.